The following is a 68-amino-acid chain: Conotoxin Cal12.1p3 (68 aa).

Positions 1–21 (DLITNSYTRGKPRHVTSWPKL) are excised as a propeptide.

In terms of processing, contains 4 disulfide bonds. As to expression, expressed by the venom duct.

Its subcellular location is the secreted. The polypeptide is Conotoxin Cal12.1p3 (Californiconus californicus (California cone)).